We begin with the raw amino-acid sequence, 298 residues long: tRNA dimethylallyltransferase 2 (298 aa).

An ATP-binding site is contributed by 19–26; it reads GATATGKT. 21–26 serves as a coordination point for substrate; it reads TATGKT. The interaction with substrate tRNA stretch occupies residues 44–47; it reads DSRQ.

Belongs to the IPP transferase family. In terms of assembly, monomer. Mg(2+) is required as a cofactor.

The catalysed reaction is adenosine(37) in tRNA + dimethylallyl diphosphate = N(6)-dimethylallyladenosine(37) in tRNA + diphosphate. Its function is as follows. Catalyzes the transfer of a dimethylallyl group onto the adenine at position 37 in tRNAs that read codons beginning with uridine, leading to the formation of N6-(dimethylallyl)adenosine (i(6)A). The polypeptide is tRNA dimethylallyltransferase 2 (Treponema denticola (strain ATCC 35405 / DSM 14222 / CIP 103919 / JCM 8153 / KCTC 15104)).